The following is a 78-amino-acid chain: DNA-directed RNA polymerase subunit omega (78 aa).

This sequence belongs to the RNA polymerase subunit omega family. In cyanobacteria the RNAP catalytic core is composed of 2 alpha, 1 beta, 1 beta', 1 gamma and 1 omega subunit. When a sigma factor is associated with the core the holoenzyme is formed, which can initiate transcription.

The catalysed reaction is RNA(n) + a ribonucleoside 5'-triphosphate = RNA(n+1) + diphosphate. Promotes RNA polymerase assembly. Latches the N- and C-terminal regions of the beta' subunit thereby facilitating its interaction with the beta and alpha subunits. In Trichormus variabilis (strain ATCC 29413 / PCC 7937) (Anabaena variabilis), this protein is DNA-directed RNA polymerase subunit omega.